A 194-amino-acid chain; its full sequence is Translation machinery-associated protein 22 (194 aa).

An SUI1 domain is found at 102 to 173 (VQIKRVERNK…DVKEWLLELY (72 aa)).

This sequence belongs to the DENR family. Interacts with the 40S ribosomal subunit.

The protein resides in the cytoplasm. The sequence is that of Translation machinery-associated protein 22 (tma22) from Aspergillus fumigatus (strain ATCC MYA-4609 / CBS 101355 / FGSC A1100 / Af293) (Neosartorya fumigata).